The sequence spans 908 residues: NADH-quinone oxidoreductase subunit G (908 aa).

One can recognise a 2Fe-2S ferredoxin-type domain in the interval 2 to 83; the sequence is ATIHVDGKEY…GTFISIDDEE (82 aa). The [2Fe-2S] cluster site is built by cysteine 34, cysteine 45, cysteine 48, and cysteine 67. A 4Fe-4S His(Cys)3-ligated-type domain is found at 83 to 122; that stretch reads EAKQFRESVVEWLMTNHPHDCPVCEEGGNCHLQDMTVMTG. Positions 99, 103, 106, 112, 151, 154, 157, 201, 228, 231, 235, and 263 each coordinate [4Fe-4S] cluster. Residues 221–277 enclose the 4Fe-4S Mo/W bis-MGD-type domain; the sequence is MQFAPSICQQCSIGCNISPGERYGELRRIENRYNGTVNHYFLCDRGRFGYGYVNLKD.

It belongs to the complex I 75 kDa subunit family. In terms of assembly, composed of 13 different subunits. Subunits NuoCD, E, F, and G constitute the peripheral sector of the complex. The cofactor is [2Fe-2S] cluster. It depends on [4Fe-4S] cluster as a cofactor.

The enzyme catalyses a quinone + NADH + 5 H(+)(in) = a quinol + NAD(+) + 4 H(+)(out). NDH-1 shuttles electrons from NADH, via FMN and iron-sulfur (Fe-S) centers, to quinones in the respiratory chain. The immediate electron acceptor for the enzyme in this species is believed to be ubiquinone. Couples the redox reaction to proton translocation (for every two electrons transferred, four hydrogen ions are translocated across the cytoplasmic membrane), and thus conserves the redox energy in a proton gradient. The protein is NADH-quinone oxidoreductase subunit G (nuoG) of Shigella flexneri.